The sequence spans 135 residues: uncharacterized protein (135 aa).

Positions 25–123 (CPIQHVVDLL…LGSDWLEQES (99 aa)) constitute an HTH hxlR-type domain.

This is an uncharacterized protein from Synechocystis sp. (strain ATCC 27184 / PCC 6803 / Kazusa).